The chain runs to 2579 residues: Ectopic P granules protein 5 homolog (2579 aa).

Disordered stretches follow at residues 1–46 (MAEA…SREQ) and 92–132 (NEES…GTKV). A compositionally biased stretch (basic residues) spans 7–23 (PQRRAKAKASRTKTKEK). A compositionally biased stretch (basic and acidic residues) spans 24–34 (KKYETPQREES). At T134 the chain carries Phosphothreonine. The tract at residues 535–564 (PSERKPSSSGPGSGTWTLVDEGGEEDEDPE) is disordered. Over residues 555–564 (EGGEEDEDPE) the composition is skewed to acidic residues. Residues 1607–1633 (MHKNEAISQQLHVLRKEVKQLQAEAAK) adopt a coiled-coil conformation.

This sequence belongs to the EPG5 family. Interacts with RAN.

It localises to the cytoplasm. Its subcellular location is the perinuclear region. The protein localises to the lysosome. Its function is as follows. Involved in autophagy. May play a role in a late step of autophagy, such as clearance of autophagosomal cargo. Plays a key role in innate and adaptive immune response triggered by unmethylated cytidine-phosphate-guanosine (CpG) dinucleotides from pathogens, and mediated by the nucleotide-sensing receptor TLR9. It is necessary for the translocation of CpG dinucleotides from early endosomes to late endosomes and lysosomes, where TLR9 is located. This chain is Ectopic P granules protein 5 homolog (EPG5), found in Homo sapiens (Human).